The chain runs to 293 residues: Homoserine kinase (293 aa).

84–94 contributes to the ATP binding site; that stretch reads PISRGLGSSSA.

It belongs to the GHMP kinase family. Homoserine kinase subfamily.

The protein resides in the cytoplasm. The catalysed reaction is L-homoserine + ATP = O-phospho-L-homoserine + ADP + H(+). The protein operates within amino-acid biosynthesis; L-threonine biosynthesis; L-threonine from L-aspartate: step 4/5. Its function is as follows. Catalyzes the ATP-dependent phosphorylation of L-homoserine to L-homoserine phosphate. The polypeptide is Homoserine kinase (Wolinella succinogenes (strain ATCC 29543 / DSM 1740 / CCUG 13145 / JCM 31913 / LMG 7466 / NCTC 11488 / FDC 602W) (Vibrio succinogenes)).